Consider the following 141-residue polypeptide: Cystatin-S (141 aa).

Positions 1–27 (MAYLLHAQLFLLTTFILVLNMRLCPVL) are cleaved as a signal peptide. Residues 76 to 80 (QVVAG) carry the Secondary area of contact motif. Disulfide bonds link cysteine 94-cysteine 104 and cysteine 118-cysteine 138.

It belongs to the cystatin family. As to expression, found in saliva, tears, urine and seminal fluid.

The protein resides in the secreted. This protein strongly inhibits papain and ficin, partially inhibits stem bromelain and bovine cathepsin C, but does not inhibit porcine cathepsin B or clostripain. Papain is inhibited non-competitively. The polypeptide is Cystatin-S (Cst4) (Rattus norvegicus (Rat)).